The primary structure comprises 82 residues: MARKPKESSTVDFETTLNQLETIVTRLEAGDLPLEEALKEFENGIKLAKLGQERLQQAEQRIQILLQKSDTAELTDYQPTDE.

The protein belongs to the XseB family. Heterooligomer composed of large and small subunits.

Its subcellular location is the cytoplasm. It carries out the reaction Exonucleolytic cleavage in either 5'- to 3'- or 3'- to 5'-direction to yield nucleoside 5'-phosphates.. Bidirectionally degrades single-stranded DNA into large acid-insoluble oligonucleotides, which are then degraded further into small acid-soluble oligonucleotides. In Mannheimia succiniciproducens (strain KCTC 0769BP / MBEL55E), this protein is Exodeoxyribonuclease 7 small subunit.